Here is a 95-residue protein sequence, read N- to C-terminus: UPF0358 protein BA_4159/GBAA_4159/BAS3861 (95 aa).

The protein belongs to the UPF0358 family.

This Bacillus anthracis protein is UPF0358 protein BA_4159/GBAA_4159/BAS3861.